The sequence spans 1276 residues: Component of gems protein 5 (1276 aa).

The interaction with U4 snRNA stretch occupies residues 53-55 (NWY). 8 WD repeats span residues 92–139 (GHTD…DDHN), 183–223 (EHKA…VFPI), 228–268 (GNNI…TVCK), 271–336 (AHSA…IESG), 364–405 (NDKQ…SPPE), 438–481 (TTKN…IKIQ), 485–522 (GFVY…KDAY), and 530–574 (GIQS…SKIF). Residues 138 to 157 (HNEDTEIGDDFKHGSGGGGS) are disordered. The disordered stretch occupies residues 586–652 (IWKPPPTPTP…NSNNEQQPNK (67 aa)). The span at 598-646 (NINNNNNNNNNNNNNNNNNNNNNNNNNNNNNNNNNNNNINNNNNNNSNN) shows a compositional bias: low complexity. WD repeat units follow at residues 688-727 (TFSK…LTRI) and 729-771 (EHKK…NQNE). Positions 772 to 793 (NEKKIDNEKGKENENEKGKENE) are enriched in basic and acidic residues. Positions 772–809 (NEKKIDNEKGKENENEKGKENENENENENENENENENE) are disordered. Residues 778 to 829 (NEKGKENENEKGKENENENENENENENENENENEIENIVNNNNENDTEIEIK) adopt a coiled-coil conformation. A compositionally biased stretch (acidic residues) spans 794-809 (NENENENENENENENE). WD repeat units lie at residues 863–903 (GHKN…AISN) and 906–946 (GHDG…FKTV). Positions 967-997 (ITEQQQQQQQPQSPIKSNPDQSNNPSLVPPI) are disordered. The span at 979 to 992 (SPIKSNPDQSNNPS) shows a compositional bias: polar residues.

It belongs to the WD repeat gemin-5 family. In terms of assembly, part of the core SMN complex.

It localises to the nucleus. The protein resides in the nucleoplasm. The protein localises to the gem. It is found in the cytoplasm. The SMN complex catalyzes the assembly of small nuclear ribonucleoproteins (snRNPs), the building blocks of the spliceosome, and thereby plays an important role in the splicing of cellular pre-mRNAs. Most spliceosomal snRNPs contain a common set of Sm proteins SNRPB, SNRPD1, SNRPD2, SNRPD3, SNRPE, SNRPF and SNRPG that assemble in a heptameric protein ring on the Sm site of the small nuclear RNA to form the core snRNP (Sm core). In the cytosol, the Sm proteins SNRPD1, SNRPD2, SNRPE, SNRPF and SNRPG are trapped in an inactive 6S pICln-Sm complex by the chaperone CLNS1A that controls the assembly of the core snRNP. To assemble core snRNPs, the SMN complex accepts the trapped 5Sm proteins from CLNS1A forming an intermediate. Binding of snRNA inside 5Sm ultimately triggers eviction of the SMN complex, thereby allowing binding of SNRPD3 and SNRPB to complete assembly of the core snRNP. Within the SMN complex, GEMIN5 recognizes and delivers the small nuclear RNAs (snRNAs) to the SMN complex. Binds to the 7-methylguanosine cap of RNA molecules. This chain is Component of gems protein 5 (gemin5), found in Dictyostelium discoideum (Social amoeba).